Here is a 622-residue protein sequence, read N- to C-terminus: Protein FAM234B (622 aa).

The disordered stretch occupies residues Met-1–Glu-68. Ser-16 is subject to Phosphoserine. A Phosphothreonine modification is found at Thr-26. Phosphoserine is present on residues Ser-30, Ser-33, and Ser-62. The chain crosses the membrane as a helical span at residues Thr-104–Leu-124.

It belongs to the FAM234 family.

It localises to the membrane. The protein localises to the golgi outpost. Its subcellular location is the cytoplasm. The protein resides in the cytoskeleton. It is found in the microtubule organizing center. In Homo sapiens (Human), this protein is Protein FAM234B.